The chain runs to 222 residues: Pro-opiomelanocortin-1 (222 aa).

The signal sequence occupies residues 1–28 (MVRGERMLCPAWLLALAVLCAAGSEVRA). The propeptide occupies 29 to 105 (QCMEDARCRD…DPESSPQHEH (77 aa)).

It belongs to the POMC family. Specific enzymatic cleavages at paired basic residues yield the different active peptides.

It localises to the secreted. Stimulates the adrenal glands to release cortisol. In terms of biological role, anorexigenic peptide. Increases the pigmentation of skin by increasing melanin production in melanocytes. Its function is as follows. Increases the pigmentation of skin by increasing melanin production in melanocytes. Functionally, endogenous orexigenic opiate. Endogenous opiate. This is Pro-opiomelanocortin-1 (pomca) from Cyprinus carpio (Common carp).